The chain runs to 101 residues: Small ribosomal subunit protein bS6 (101 aa).

This sequence belongs to the bacterial ribosomal protein bS6 family.

In terms of biological role, binds together with bS18 to 16S ribosomal RNA. This is Small ribosomal subunit protein bS6 from Nitratidesulfovibrio vulgaris (strain DSM 19637 / Miyazaki F) (Desulfovibrio vulgaris).